A 193-amino-acid chain; its full sequence is Superoxide dismutase [Fe] (193 aa).

Fe cation-binding residues include His27, His74, Asp157, and His161.

Belongs to the iron/manganese superoxide dismutase family. Homodimer. Fe cation is required as a cofactor.

The enzyme catalyses 2 superoxide + 2 H(+) = H2O2 + O2. Destroys superoxide anion radicals which are normally produced within the cells and which are toxic to biological systems. This Coxiella burnetii (strain RSA 493 / Nine Mile phase I) protein is Superoxide dismutase [Fe] (sodB).